A 644-amino-acid polypeptide reads, in one-letter code: Threonine--tRNA ligase (644 aa).

Residues 1–61 (MINVTLPDGS…DGDAQVAIIT (61 aa)) enclose the TGS domain. A catalytic region spans residues 243–536 (DHRKLGKQME…LIESYAGKLP (294 aa)). Positions 336, 387, and 513 each coordinate Zn(2+).

It belongs to the class-II aminoacyl-tRNA synthetase family. In terms of assembly, homodimer. Zn(2+) serves as cofactor.

It localises to the cytoplasm. It carries out the reaction tRNA(Thr) + L-threonine + ATP = L-threonyl-tRNA(Thr) + AMP + diphosphate + H(+). Its function is as follows. Catalyzes the attachment of threonine to tRNA(Thr) in a two-step reaction: L-threonine is first activated by ATP to form Thr-AMP and then transferred to the acceptor end of tRNA(Thr). Also edits incorrectly charged L-seryl-tRNA(Thr). In Maricaulis maris (strain MCS10) (Caulobacter maris), this protein is Threonine--tRNA ligase.